Reading from the N-terminus, the 147-residue chain is Hemoglobin subunit gamma-1 (147 aa).

A Globin domain is found at 3–147; sequence NFTAEDKAAI…VASALGSRYH (145 aa). Position 13 is a phosphothreonine (T13). Phosphoserine is present on residues S45, S51, and S53. An N6-acetyllysine modification is found at K60. H64 serves as a coordination point for heme b. N6-acetyllysine is present on K83. H93 is a binding site for heme b. C94 carries the S-nitrosocysteine modification. S140 carries the post-translational modification Phosphoserine.

This sequence belongs to the globin family. As to quaternary structure, heterotetramer of two alpha chains and two gamma chains in fetal hemoglobin (Hb F). As to expression, red blood cells.

In terms of biological role, gamma chains make up the fetal hemoglobin F, in combination with alpha chains. The polypeptide is Hemoglobin subunit gamma-1 (HBG1) (Plecturocebus moloch (Dusky titi monkey)).